The following is a 507-amino-acid chain: Glycerol kinase (507 aa).

An ADP-binding site is contributed by threonine 14. ATP contacts are provided by threonine 14, threonine 15, and serine 16. Threonine 14 provides a ligand contact to sn-glycerol 3-phosphate. Arginine 18 serves as a coordination point for ADP. 4 residues coordinate sn-glycerol 3-phosphate: arginine 84, glutamate 85, tyrosine 136, and aspartate 246. Residues arginine 84, glutamate 85, tyrosine 136, aspartate 246, and glutamine 247 each coordinate glycerol. Threonine 268 and glycine 311 together coordinate ADP. 4 residues coordinate ATP: threonine 268, glycine 311, glutamine 315, and glycine 412. Residues glycine 412 and asparagine 416 each contribute to the ADP site.

Belongs to the FGGY kinase family.

The enzyme catalyses glycerol + ATP = sn-glycerol 3-phosphate + ADP + H(+). Its pathway is polyol metabolism; glycerol degradation via glycerol kinase pathway; sn-glycerol 3-phosphate from glycerol: step 1/1. Its activity is regulated as follows. Inhibited by fructose 1,6-bisphosphate (FBP). Its function is as follows. Key enzyme in the regulation of glycerol uptake and metabolism. Catalyzes the phosphorylation of glycerol to yield sn-glycerol 3-phosphate. The protein is Glycerol kinase of Vibrio atlanticus (strain LGP32) (Vibrio splendidus (strain Mel32)).